We begin with the raw amino-acid sequence, 360 residues long: Peptide chain release factor 1 (360 aa).

Residue glutamine 235 is modified to N5-methylglutamine. Basic and acidic residues predominate over residues 284-293; that stretch reads QKRQQEEAST. Residues 284–305 form a disordered region; that stretch reads QKRQQEEASTRRNLLGSGDRSD.

It belongs to the prokaryotic/mitochondrial release factor family. In terms of processing, methylated by PrmC. Methylation increases the termination efficiency of RF1.

It localises to the cytoplasm. Functionally, peptide chain release factor 1 directs the termination of translation in response to the peptide chain termination codons UAG and UAA. This Pectobacterium carotovorum subsp. carotovorum (strain PC1) protein is Peptide chain release factor 1.